The sequence spans 71 residues: Small ribosomal subunit protein bS21 (71 aa).

It belongs to the bacterial ribosomal protein bS21 family.

This is Small ribosomal subunit protein bS21 from Blochmanniella floridana.